A 62-amino-acid chain; its full sequence is Amolopin-p-MT1 (62 aa).

The N-terminal stretch at 1 to 22 (MFTLKKSLLLLFFLGTISLSLC) is a signal peptide. A propeptide spans 23–42 (EQERGADEEENGGEVTEEEV) (removed in mature form).

It belongs to the frog skin active peptide (FSAP) family. Brevinin subfamily. Expressed by the skin glands.

It localises to the secreted. In terms of biological role, antimicrobial peptide. Active against a variety of Gram-negative and Gram-positive bacterial strains. Not active against fungi. Shows weak hemolytic activity against human erythrocytes. This Amolops mantzorum (Sichuan torrent frog) protein is Amolopin-p-MT1.